The sequence spans 445 residues: MKVKMLSRNPDNYVRETKLDLQRVPRNYDPALHPFEVPREYIRALNATKLERVFAKPFLASLDGHRDGVNCLAKHPEKLATVLSGACDGEVRIWNLTQRNCIRTIQAHEGFVRGICTRFCGTSFFTVGDDKTVKQWKMDGPGYGDEEEPLHTILGKTVYTGIDHHWKEAVFATCGQQVDIWDEQRTNPICSMTWGFDSISSVKFNPIETFLLGSCASDRNIVLYDMRQATPLKKVILDMRTNTICWNPMEAFIFTAANEDYNLYTFDMRALDTPVMVHMDHVSAVLDVDYSPTGKEFVSASFDKSIRIFPVDKSRSREVYHTKRMQHVICVKWTSDSKYIMCGSDEMNIRLWKANASEKLGVLTSREKAAKDYNQKLKEKFQHYPHIKRIARHRHLPKSIYSQIQEQRIMKEARRRKEVNRIKHSKPGSVPLVSEKKKHVVAVVK.

Lys49 carries the N6-acetyllysine modification. 7 WD repeats span residues 64–104 (GHRD…CIRT), 107–146 (AHEG…YGDE), 149–191 (PLHT…PICS), 194–234 (WGFD…PLKK), 236–276 (ILDM…TPVM), 280–319 (DHVS…SREV), and 323–362 (KRMQ…KLGV). Residues 353 to 441 (KANASEKLGV…LVSEKKKHVV (89 aa)) are required for nucleolar location.

The protein belongs to the WD repeat DCAF13/WDSOF1 family. As to quaternary structure, part of the small subunit (SSU) processome, composed of more than 70 proteins and the RNA chaperone small nucleolar RNA (snoRNA) U3. Component of the DCX(DCAF13) E3 ubiquitin ligase complex, at least composed of CUL4 (CUL4A or CUL4B), DDB1, DCAF13 and RBX1. Interacts (via WD40 domain) with DDB1. Interacts with ESR1 and LATS1. As to expression, expressed in the endometrium during decidualization. Expression is down-regulated in preeclampsia decidual tissues.

It localises to the nucleus. Its subcellular location is the nucleolus. It participates in protein modification; protein ubiquitination. In terms of biological role, part of the small subunit (SSU) processome, first precursor of the small eukaryotic ribosomal subunit. During the assembly of the SSU processome in the nucleolus, many ribosome biogenesis factors, an RNA chaperone and ribosomal proteins associate with the nascent pre-rRNA and work in concert to generate RNA folding, modifications, rearrangements and cleavage as well as targeted degradation of pre-ribosomal RNA by the RNA exosome. Participates in the 18S rRNA processing in growing oocytes, being essential for oocyte nonsurrounded nucleolus (NSN) to surrounded nucleolus (SN) transition. Functionally, substrate-recognition component of a DCX (DDB1-CUL4-X-box) E3 ubiquitin-protein ligase complex that plays a key role in embryo preimplantation and is required for normal meiotic cycle progression in oocytes. Acts as a maternal factor that regulates oocyte and zygotic chromatin tightness during maternal to zygotic transition. Also involved in the transformation of the endometrium into the decidua, known as decidualization, providing a solid foundation for implantation of blastocysts. Recognizes the histone methyltransferases SUV39H1 and SUV39H2 and directs them to polyubiquitination and proteasomal degradation, which facilitates the H3K9me3 removal and early zygotic gene expression, essential steps for progressive genome reprogramming and the establishment of pluripotency during preimplantation embryonic development. Supports the spindle assembly and chromosome condensation during oocyte meiotic division by targeting the polyubiquitination and degradation of PTEN, a lipid phosphatase that inhibits PI3K pathway as well as oocyte growth and maturation. Targets PMP22 for polyubiquitination and proteasomal degradation. In Homo sapiens (Human), this protein is DDB1- and CUL4-associated factor 13.